Here is a 308-residue protein sequence, read N- to C-terminus: Putative mitochondrial transporter UCP3 (308 aa).

The Mitochondrial intermembrane segment spans residues 1 to 10 (MVGLQPSEVP). A helical transmembrane segment spans residues 11-32 (PTTVVKFLGAGTAACFADLLTF). Solcar repeat units lie at residues 11-102 (PTTV…VKQF), 111-202 (SSVA…IKEK), and 211-296 (DNFP…LKRA). Residues 33-73 (PLDTAKVRLQIQGENPGVQSVQYRGVLGTILTMVRTEGPRS) lie on the Mitochondrial matrix side of the membrane. The helical transmembrane segment at 74–96 (PYSGLVAGLHRQMSFASIRIGLY) threads the bilayer. Topologically, residues 97-116 (DSVKQFYTPKGTDHSSVAIR) are mitochondrial intermembrane. A helical transmembrane segment spans residues 117-133 (ILAGCTTGAMAVTCAQP). At 134-179 (TDVVKVRFQAMIRLGTGGERKYRGTMDAYRTIAREEGVRGLWKGTW) the chain is on the mitochondrial matrix side. Residues 180–196 (PNITRNAIVNCAEMVTY) traverse the membrane as a helical segment. The Mitochondrial intermembrane portion of the chain corresponds to 197–213 (DIIKEKLLDSHLFTDNF). Residues 214–233 (PCHFVSAFGAGFCATVVASP) form a helical membrane-spanning segment. The Mitochondrial matrix portion of the chain corresponds to 234–267 (VDVVKTRYMNAPPGRYRSPLHCMLRMVAQEGPTA). A helical transmembrane segment spans residues 268–290 (FYKGFMPSFLRLGSWNVMMFVTY). A purine nucleotide binding region spans residues 275 to 297 (SFLRLGSWNVMMFVTYEQLKRAL). Topologically, residues 291–308 (EQLKRALMKVQVLRESPF) are mitochondrial intermembrane.

It belongs to the mitochondrial carrier (TC 2.A.29) family. In terms of assembly, interacts with HAX1; the interaction is direct and calcium-dependent.

It localises to the mitochondrion inner membrane. Its function is as follows. Putative transmembrane transporter that plays a role in mitochondrial metabolism via an as yet unclear mechanism. Originally, this mitochondrial protein was thought to act as a proton transmembrane transporter from the mitochondrial intermembrane space into the matrix, causing proton leaks through the inner mitochondrial membrane, thereby uncoupling mitochondrial membrane potential generation from ATP synthesis. However, this function is controversial and uncoupling may not be the function, or at least not the main function, but rather a consequence of more conventional metabolite transporter activity. The polypeptide is Putative mitochondrial transporter UCP3 (Rattus norvegicus (Rat)).